The chain runs to 598 residues: MAQRLEAEGNKNFKGKSKWDDGSDKDDIGKISVRCEDGGITYIRFDYIKSGQPQYNTFPGNPGRGILQTFDINHKNDEHLESVEGYYDPKSDAIKGLQFKTNMRISELIGYANDGATKFSLAVEGKKIIGFHGAYNTYLNSLGAYVTWIVPTKLKAKGGKGGKEWNDGADHEGITKIYVRGGYEGLQYVKFDYIKDGQQIYGSPHGVRGRGFTELFEINHLDKEYLISVEGYYDEGESGVIQGIQFKTNIRTSELMGDNRGRKFSLAANGKKIIGFHGYAEKNLNSLGAYFTTSPFTKLEVGTTSADLWDDGTFDGIRNVYIHYDGDAVCCVEVDYDNKGKVEKREHGIMIAPFIERGEFVVDYPNEFITSVEVTISKQNDSPVPSLTSETVASLTFKTSKGRTSSTFGSPATKKFVLQSKGCGVVGFLGRSSYYTYALGAHFCPLPPLPDGEKVEAKGGDGGASWDDGRFDCIRKIYIGHSEMGIAFVKFLYDKDNKVVVGDDHGSKTLLGVDEFELEHPDEYLISVEGSYDVVDGSESEVIRMLRFKTNMRTSQLFGHETTSNFTLQKECHKIVGFHGKIGEMLHQIGVHVLPITD.

The disordered stretch occupies residues 1–23 (MAQRLEAEGNKNFKGKSKWDDGS). Jacalin-type lectin domains lie at 2–148 (AQRL…YVTW), 151–293 (PTKL…YFTT), 295–445 (PFTK…HFCP), and 452–595 (GEKV…HVLP).

The protein belongs to the jacalin lectin family.

In Arabidopsis thaliana (Mouse-ear cress), this protein is Jacalin-related lectin 17 (JAL17).